A 150-amino-acid polypeptide reads, in one-letter code: Protein SprT-like (150 aa).

The SprT-like domain occupies 11–149 (ELVDKLSLTY…CGKCRGSLKE (139 aa)). Zn(2+) is bound at residue histidine 70. The active site involves glutamate 71. Histidine 74 contributes to the Zn(2+) binding site.

The protein belongs to the SprT family. Zn(2+) serves as cofactor.

It localises to the cytoplasm. This Oceanobacillus iheyensis (strain DSM 14371 / CIP 107618 / JCM 11309 / KCTC 3954 / HTE831) protein is Protein SprT-like.